Here is a 561-residue protein sequence, read N- to C-terminus: Oxygen-dependent choline dehydrogenase (561 aa).

6-35 is an FAD binding site; it reads DYIIIGAGSAGNVLATRLTEDADVSVLLLE. The Proton acceptor role is filled by histidine 475.

This sequence belongs to the GMC oxidoreductase family. The cofactor is FAD.

The enzyme catalyses choline + A = betaine aldehyde + AH2. It carries out the reaction betaine aldehyde + NAD(+) + H2O = glycine betaine + NADH + 2 H(+). The protein operates within amine and polyamine biosynthesis; betaine biosynthesis via choline pathway; betaine aldehyde from choline (cytochrome c reductase route): step 1/1. Its function is as follows. Involved in the biosynthesis of the osmoprotectant glycine betaine. Catalyzes the oxidation of choline to betaine aldehyde and betaine aldehyde to glycine betaine at the same rate. The protein is Oxygen-dependent choline dehydrogenase of Pseudomonas aeruginosa (strain UCBPP-PA14).